Reading from the N-terminus, the 97-residue chain is uncharacterized protein (97 aa).

This is an uncharacterized protein from Mycobacterium tuberculosis (strain CDC 1551 / Oshkosh).